The primary structure comprises 235 residues: Large ribosomal subunit protein bL25 (235 aa).

2 disordered regions span residues 1-21 (MADN…PARR) and 210-235 (APAA…GAKK). A compositionally biased stretch (low complexity) spans 210-222 (APAAGAAPAAGGE). The segment covering 223–235 (AAKKAPEAKGAKK) has biased composition (basic and acidic residues).

This sequence belongs to the bacterial ribosomal protein bL25 family. CTC subfamily. Part of the 50S ribosomal subunit; part of the 5S rRNA/L5/L18/L25 subcomplex. Contacts the 5S rRNA. Binds to the 5S rRNA independently of L5 and L18.

Its function is as follows. This is one of the proteins that binds to the 5S RNA in the ribosome where it forms part of the central protuberance. This Anaeromyxobacter sp. (strain Fw109-5) protein is Large ribosomal subunit protein bL25.